A 637-amino-acid polypeptide reads, in one-letter code: Sterol 3-beta-glucosyltransferase UGT80A2 (637 aa).

Disordered stretches follow at residues 1–29 (MPEI…RASV) and 66–112 (VAES…TERQ). The segment covering 13–24 (SSSSSSSSSSSS) has biased composition (low complexity). The segment covering 67–79 (AESSGTGNKSFSR) has biased composition (polar residues). Basic and acidic residues predominate over residues 103–112 (RLDKSKTERQ).

This sequence belongs to the glycosyltransferase 28 family. Expressed in roots, cauline leaf epidermal cells, stomata, stamen, pollen and around the base of siliques.

It catalyses the reaction a sterol + UDP-alpha-D-glucose = a sterol 3-beta-D-glucoside + UDP + H(+). Functionally, involved in the biosynthesis of sterol glucosides. Catalyzes the synthesis of steryl glycosides (SGs) and acyl steryl glycosides (ASGs) which are the most abundant sterol derivatives in higher plants. Can act on several sterols like sitosterol, campesterol and stigmasterol. Both UGT80A2 and UGT80B1 are required for the normal production of SGs and ASGs in seeds. The protein is Sterol 3-beta-glucosyltransferase UGT80A2 (UGT80A2) of Arabidopsis thaliana (Mouse-ear cress).